The primary structure comprises 552 residues: Urocanate hydratase (552 aa).

Residues G48–G49, Q126, G172–G174, D192, N238–A239, Q259–H263, Y268–L269, and Y317 each bind NAD(+). Residue C405 is part of the active site. G487 provides a ligand contact to NAD(+).

This sequence belongs to the urocanase family. The cofactor is NAD(+).

It localises to the cytoplasm. It carries out the reaction 4-imidazolone-5-propanoate = trans-urocanate + H2O. Its pathway is amino-acid degradation; L-histidine degradation into L-glutamate; N-formimidoyl-L-glutamate from L-histidine: step 2/3. Its function is as follows. Catalyzes the conversion of urocanate to 4-imidazolone-5-propionate. The polypeptide is Urocanate hydratase (Streptomyces griseus subsp. griseus (strain JCM 4626 / CBS 651.72 / NBRC 13350 / KCC S-0626 / ISP 5235)).